The following is a 160-amino-acid chain: Nutritionally-regulated adipose and cardiac enriched protein homolog (160 aa).

The tract at residues Met1–Val69 is disordered. 2 stretches are compositionally biased toward basic and acidic residues: residues Ser12–Glu25 and Cys33–Lys42. A helical transmembrane segment spans residues Gly101 to Tyr121.

Its subcellular location is the cell membrane. This is Nutritionally-regulated adipose and cardiac enriched protein homolog (NRAC) from Homo sapiens (Human).